Consider the following 266-residue polypeptide: Oxidoreductase aflX (266 aa).

Belongs to the avfA family.

Its pathway is mycotoxin biosynthesis; aflatoxin biosynthesis. Oxidoreductase; part of the gene cluster that mediates the biosynthesis of aflatoxins, a group of polyketide-derived furanocoumarins, and part of the most toxic and carcinogenic compounds among the known mycotoxins. The four major aflatoxins produced by A.parasiticus are aflatoxin B1 (AFB1), aflatoxin B2 (AFB2), aflatoxin G1 (AFG1) and aflatoxin G2 (AFG2). Within the aflatoxin pathway, the oxidoreductase aflX seems to be involved in the conversion of versicolorin A (VERA) to demethylsterigmatocystin (DMST), through probable epoxide ring-opening step following versicolorin A oxidation required for the formation of the xanthone ring. The biosynthesis of aflatoxins begins with the norsolorinic acid synthase aflC that combines a hexanoyl starter unit produced by the fatty acid synthase aflA/aflB and 7 malonyl-CoA extender units to synthesize the precursor NOR. The second step is the conversion of NOR to averantin and requires the norsolorinic acid ketoreductase aflD, which catalyzes the dehydration of norsolorinic acid to form (1'S)-averantin. The norsolorinic acid reductases aflE and aflF may also play a role in the conversion of NOR to AVN. The cytochrome P450 monooxygenase aflG then catalyzes the hydroxylation of AVN to 5'hydroxyaverantin (HAVN). The next step is performed by the 5'-hydroxyaverantin dehydrogenase aflH that transforms HAVN to 5'-oxoaverantin (OAVN) which is further converted to averufin (AVF) by aflK that plays a dual role in the pathway, as a 5'-oxoaverantin cyclase that mediates conversion of 5'-oxoaverantin, as well as a versicolorin B synthase in a later step in the pathway. The averufin oxidase aflI catalyzes the conversion of AVF to versiconal hemiacetal acetate (VHA). VHA is then the substrate for the versiconal hemiacetal acetate esterase aflJ to yield versiconal (VAL). Versicolorin B synthase aflK then converts VAL to versicolorin B (VERB) by closing the bisfuran ring of aflatoxin which is required for DNA-binding, thus giving to aflatoxin its activity as a mutagen. Then, the activity of the versicolorin B desaturase aflL leads to versicolorin A (VERA). A branch point starts from VERB since it can also be converted to dihydrodemethylsterigmatocystin (DMDHST), probably also by aflL, VERA being a precursor for aflatoxins B1 and G1, and DMDHST for aflatoxins B2 and G2. Next, the versicolorin reductase aflM and the cytochrome P450 monooxygenase aflN are involved in conversion of VERA to demethylsterigmatocystin (DMST). AflX and aflY seem also involved in this step, through probable aflX-mediated epoxide ring-opening step following versicolorin A oxidation and aflY-mediated Baeyer-Villiger oxidation required for the formation of the xanthone ring. The methyltransferase aflO then leads to the modification of DMST to sterigmatocystin (ST), and of DMDHST to dihydrosterigmatocystin (DHST). Both ST and DHST are then substrates of the O-methyltransferase aflP to yield O-methylsterigmatocystin (OMST) and dihydro-O-methylsterigmatocystin (DHOMST), respectively. Finally OMST is converted to aflatoxins B1 and G1, and DHOMST to aflatoxins B2 and G2, via the action of several enzymes including O-methylsterigmatocystin oxidoreductase aflQ, the cytochrome P450 monooxygenase aflU, but also the NADH-dependent flavin oxidoreductase nadA which is specifically required for the synthesis of AFG1. In Aspergillus parasiticus (strain ATCC 56775 / NRRL 5862 / SRRC 143 / SU-1), this protein is Oxidoreductase aflX.